A 413-amino-acid polypeptide reads, in one-letter code: Serine hydroxymethyltransferase (413 aa).

Residues leucine 115 and 119–121 (GHL) each bind (6S)-5,6,7,8-tetrahydrofolate. Lysine 224 carries the N6-(pyridoxal phosphate)lysine modification.

The protein belongs to the SHMT family. In terms of assembly, homodimer. The cofactor is pyridoxal 5'-phosphate.

The protein resides in the cytoplasm. The enzyme catalyses (6R)-5,10-methylene-5,6,7,8-tetrahydrofolate + glycine + H2O = (6S)-5,6,7,8-tetrahydrofolate + L-serine. The protein operates within one-carbon metabolism; tetrahydrofolate interconversion. It functions in the pathway amino-acid biosynthesis; glycine biosynthesis; glycine from L-serine: step 1/1. Functionally, catalyzes the reversible interconversion of serine and glycine with tetrahydrofolate (THF) serving as the one-carbon carrier. This reaction serves as the major source of one-carbon groups required for the biosynthesis of purines, thymidylate, methionine, and other important biomolecules. Also exhibits THF-independent aldolase activity toward beta-hydroxyamino acids, producing glycine and aldehydes, via a retro-aldol mechanism. This chain is Serine hydroxymethyltransferase, found in Mycoplasma mycoides subsp. mycoides SC (strain CCUG 32753 / NCTC 10114 / PG1).